A 553-amino-acid chain; its full sequence is Mucolipin-3 (553 aa).

The Cytoplasmic segment spans residues 1 to 62 (MADPEVVVSS…FWARGRKPWK (62 aa)). The tract at residues 52 to 62 (KFWARGRKPWK) is interaction with phosphoinositides. A helical transmembrane segment spans residues 63–83 (LAIQILKIAMVTIQLVLFGLS). The Extracellular segment spans residues 84-283 (NQMVVAFKEE…VSGSIQKNTH (200 aa)). The interval 104 to 118 (KGYMDRMDDTYAVYT) is extracellular/lumenal pore loop. N-linked (GlcNAc...) asparagine glycosylation is found at N138, N172, and N205. The cysteines at positions 159 and 185 are disulfide-linked. A disulfide bridge connects residues C238 and C269. The helical transmembrane segment at 284–304 (YMMIFDAFVILTCLVSLILCI) threads the bilayer. Residues 305-341 (RSVIRGLQLQQEFVNFFLLHYKKEVSVSDQMEFVNGW) are Cytoplasmic-facing. Residues 342–362 (YIMIIISDILTIIGSILKMEI) form a helical membrane-spanning segment. The Extracellular portion of the chain corresponds to 363-371 (QAKSLTSYD). The helical transmembrane segment at 372 to 392 (VCSILLGTSTMLVWLGVIRYL) threads the bilayer. Residues 393–414 (GFFAKYNLLILTLQAALPNVIR) are Cytoplasmic-facing. The helical transmembrane segment at 415–435 (FCCCAAMIYLGYCFCGWIVLG) threads the bilayer. Residues 436–443 (PYHDKFRS) lie on the Extracellular side of the membrane. Positions 444–464 (LNMVSECLFSLINGDDMFATF) form an intramembrane region, pore-forming. Positions 456-459 (NGDD) match the Selectivity filter motif. The Extracellular portion of the chain corresponds to 465-475 (AKMQQKSYLVW). A helical membrane pass occupies residues 476–497 (LFSRIYLYSFISLFIYMILSLF). Residues 498–553 (IALITDTYETIKQYQQDGFPETELRTFISECKDLPNSGKYRLEDDPPVSLFCCCKK) lie on the Cytoplasmic side of the membrane.

This sequence belongs to the transient receptor (TC 1.A.4) family. Polycystin subfamily. MCOLN3 sub-subfamily. In terms of assembly, homotetramer. Can heterooligomerize with MCOLN1; heteromeric assemblies have different channel properties as compared to the respective homooligomers and may be tissue-specific. May heterooligomerize with TRPV5 to form a functional distinct ion channel. Interacts with GABARAPL2. In terms of processing, N-glycosylated.

The protein resides in the cell membrane. It localises to the early endosome membrane. Its subcellular location is the late endosome membrane. It is found in the lysosome membrane. The protein localises to the cytoplasmic vesicle. The protein resides in the autophagosome membrane. It catalyses the reaction Ca(2+)(in) = Ca(2+)(out). It carries out the reaction K(+)(in) = K(+)(out). The enzyme catalyses Na(+)(in) = Na(+)(out). With respect to regulation, channel activity is activated by PtdIns(3,5)P2 (phosphatidylinositol 3,5-bisphosphate). Inhibited by lumenal H(+) and Na(+). The channel pore shows dynamic behavior and undergoes spontaneous, Ca(2+)-dependent modulation when conducting Ca(2+). Nonselective cation channel probably playing a role in the regulation of membrane trafficking events. Acts as a Ca(2+)-permeable cation channel with inwardly rectifying activity. Mediates release of Ca(2+) from endosomes to the cytoplasm, contributes to endosomal acidification and is involved in the regulation of membrane trafficking and fusion in the endosomal pathway. Also permeable to Mg(2+), Na(+) and K(+). Does not seem to act as mechanosensory transduction channel in inner ear sensory hair cells. Proposed to play a critical role at the cochlear stereocilia ankle-link region during hair-bundle growth. Involved in the regulation of autophagy. Through association with GABARAPL2 may be involved in autophagosome formation possibly providing Ca(2+) for the fusion process. Through a possible and probably tissue-specific heteromerization with MCOLN1 may be at least in part involved in many lysosome-dependent cellular events. Possible heteromeric ion channel assemblies with TRPV5 show pharmacological similarity with TRPML3. This is Mucolipin-3 (MCOLN3) from Homo sapiens (Human).